A 214-amino-acid polypeptide reads, in one-letter code: MTIENEALTLKKRFRGYFPVVVDVETAGFNAQTDALLEICAVTLRMDEEGVLHPASTIHFHIEPFEGANLEKEALEFNGIRDPFSPLRGAVSEQEALKEIYKLIRKEQKASDCSRAIMVAHNAAFDLSFVNAANERCKLKRVPFHPFATFDTATLSGLAYGQTVLAKACKTAGMEFDNREAHSALYDTQKTAELFCGIVNKWKALGGWPLVNEE.

The 176-residue stretch at 20–195 (VVVDVETAGF…YDTQKTAELF (176 aa)) folds into the Exonuclease domain. Mg(2+) is bound by residues D23, E25, H182, and D187. H182 functions as the Proton donor/acceptor in the catalytic mechanism.

It belongs to the RNase T family. Homodimer. It depends on Mg(2+) as a cofactor.

Its function is as follows. Trims short 3' overhangs of a variety of RNA species, leaving a one or two nucleotide 3' overhang. Responsible for the end-turnover of tRNA: specifically removes the terminal AMP residue from uncharged tRNA (tRNA-C-C-A). Also appears to be involved in tRNA biosynthesis. The sequence is that of Ribonuclease T from Vibrio parahaemolyticus serotype O3:K6 (strain RIMD 2210633).